The sequence spans 203 residues: Ribosomal RNA large subunit methyltransferase E (203 aa).

5 residues coordinate S-adenosyl-L-methionine: G51, W53, D69, D85, and D108. Residue K148 is the Proton acceptor of the active site.

Belongs to the class I-like SAM-binding methyltransferase superfamily. RNA methyltransferase RlmE family.

Its subcellular location is the cytoplasm. It catalyses the reaction uridine(2552) in 23S rRNA + S-adenosyl-L-methionine = 2'-O-methyluridine(2552) in 23S rRNA + S-adenosyl-L-homocysteine + H(+). In terms of biological role, specifically methylates the uridine in position 2552 of 23S rRNA at the 2'-O position of the ribose in the fully assembled 50S ribosomal subunit. The polypeptide is Ribosomal RNA large subunit methyltransferase E (Methanocorpusculum labreanum (strain ATCC 43576 / DSM 4855 / Z)).